The chain runs to 334 residues: Ornithine carbamoyltransferase (334 aa).

Residues serine 56–threonine 59, glutamine 83, arginine 107, and histidine 134–glutamine 137 each bind carbamoyl phosphate. L-ornithine contacts are provided by residues asparagine 168, aspartate 232, and serine 236–methionine 237. Carbamoyl phosphate contacts are provided by residues cysteine 274–leucine 275 and arginine 320.

The protein belongs to the aspartate/ornithine carbamoyltransferase superfamily. OTCase family.

It is found in the cytoplasm. The enzyme catalyses carbamoyl phosphate + L-ornithine = L-citrulline + phosphate + H(+). The protein operates within amino-acid biosynthesis; L-arginine biosynthesis; L-arginine from L-ornithine and carbamoyl phosphate: step 1/3. Reversibly catalyzes the transfer of the carbamoyl group from carbamoyl phosphate (CP) to the N(epsilon) atom of ornithine (ORN) to produce L-citrulline. In Escherichia coli O45:K1 (strain S88 / ExPEC), this protein is Ornithine carbamoyltransferase.